A 153-amino-acid polypeptide reads, in one-letter code: Regulatory protein RecX (153 aa).

The protein belongs to the RecX family.

It is found in the cytoplasm. Its function is as follows. Modulates RecA activity. The polypeptide is Regulatory protein RecX (Neisseria meningitidis serogroup C / serotype 2a (strain ATCC 700532 / DSM 15464 / FAM18)).